The sequence spans 570 residues: Periplasmic trehalase (570 aa).

A signal peptide spans 1 to 34; it reads MIPPEIRRSVLLQKAIKLALAGTLLTFASFSATA. Residues R159, 166 to 167, N203, 212 to 214, 284 to 286, and G317 each bind substrate; these read WD, RSQ, and RPE. Catalysis depends on proton donor/acceptor residues D319 and E503. A substrate-binding site is contributed by E518. The interval 544-570 is disordered; the sequence is KPCDSVPSTRPASLSATPTKTPSAATQ. The span at 554–570 shows a compositional bias: low complexity; that stretch reads PASLSATPTKTPSAATQ.

It belongs to the glycosyl hydrolase 37 family. As to quaternary structure, monomer.

The protein localises to the periplasm. The enzyme catalyses alpha,alpha-trehalose + H2O = alpha-D-glucose + beta-D-glucose. Provides the cells with the ability to utilize trehalose at high osmolarity by splitting it into glucose molecules that can subsequently be taken up by the phosphotransferase-mediated uptake system. This is Periplasmic trehalase from Salmonella schwarzengrund (strain CVM19633).